A 579-amino-acid polypeptide reads, in one-letter code: Protein inscuteable homolog (579 aa).

An important for interaction with GPSM2 region spans residues 74–89 (SVQRWMEDLKLMTECE). Positions 576–579 (ESFV) match the PDZ-binding motif.

As to quaternary structure, interacts with ALS2CR19/PAR3B and GPSM1/AGS3. Interacts with F2RL2/PAR3. Interacts with GPSM2/LGN (via TPR repeat region). Expressed in brain, kidney, liver, testis and skin.

The protein localises to the cytoplasm. It localises to the cell cortex. In terms of biological role, may function as an adapter linking the Par3 complex to the GPSM1/GPSM2 complex. Involved in spindle orientation during mitosis. May regulate cell proliferation and differentiation in the developing nervous system. May play a role in the asymmetric division of fibroblasts and participate in the process of stratification of the squamous epithelium. The chain is Protein inscuteable homolog (Insc) from Mus musculus (Mouse).